We begin with the raw amino-acid sequence, 513 residues long: Cyclin-dependent kinase C-2 (513 aa).

The Protein kinase domain occupies 25–325 (FEKLEQIGEG…AKDALDAEYF (301 aa)). ATP-binding positions include 31–39 (IGEGTYGQV) and Lys54. The residue at position 35 (Thr35) is a Phosphothreonine. Tyr36 carries the post-translational modification Phosphotyrosine. The active-site Proton acceptor is the Asp164. A Phosphoserine modification is found at Ser191. A Phosphothreonine modification is found at Thr198. Residues 336–348 (SLPKYEASHEFQT) show a composition bias toward basic and acidic residues. The interval 336-513 (SLPKYEASHE…RNQQQYGNWQ (178 aa)) is disordered. Positions 417-433 (PNRYPQGGNQGGYNPNR) are enriched in low complexity. 2 stretches are compositionally biased toward gly residues: residues 457-478 (GGGM…GVGG) and 485-494 (GPYGASGPGR). Residues 497–513 (NYNQGGSRNQQQYGNWQ) are compositionally biased toward polar residues.

This sequence belongs to the protein kinase superfamily. CMGC Ser/Thr protein kinase family. CDC2/CDKX subfamily.

The catalysed reaction is L-seryl-[protein] + ATP = O-phospho-L-seryl-[protein] + ADP + H(+). It catalyses the reaction L-threonyl-[protein] + ATP = O-phospho-L-threonyl-[protein] + ADP + H(+). The enzyme catalyses [DNA-directed RNA polymerase] + ATP = phospho-[DNA-directed RNA polymerase] + ADP + H(+). The chain is Cyclin-dependent kinase C-2 (CDKC-2) from Oryza sativa subsp. japonica (Rice).